A 510-amino-acid polypeptide reads, in one-letter code: NAD(P)H-quinone oxidoreductase subunit 2 B, chloroplastic (510 aa).

A run of 13 helical transmembrane segments spans residues 24 to 44, 57 to 77, 99 to 119, 124 to 144, 149 to 169, 183 to 203, 227 to 247, 295 to 315, 323 to 343, 354 to 374, 395 to 415, 418 to 438, and 484 to 504; these read LLLF…GLIL, IPWL…ALLF, IFQF…VEYI, MAIT…MFLC, LITI…LSGY, YLLM…WLYG, PGIS…LSPA, WHLL…LIAI, MLAY…IVGD, YMLF…LFGL, ALSL…AGFF, LYLF…IGLL, and MIVC…IIAI.

This sequence belongs to the complex I subunit 2 family. As to quaternary structure, NDH is composed of at least 16 different subunits, 5 of which are encoded in the nucleus.

The protein resides in the plastid. It localises to the chloroplast thylakoid membrane. It carries out the reaction a plastoquinone + NADH + (n+1) H(+)(in) = a plastoquinol + NAD(+) + n H(+)(out). The enzyme catalyses a plastoquinone + NADPH + (n+1) H(+)(in) = a plastoquinol + NADP(+) + n H(+)(out). Its function is as follows. NDH shuttles electrons from NAD(P)H:plastoquinone, via FMN and iron-sulfur (Fe-S) centers, to quinones in the photosynthetic chain and possibly in a chloroplast respiratory chain. The immediate electron acceptor for the enzyme in this species is believed to be plastoquinone. Couples the redox reaction to proton translocation, and thus conserves the redox energy in a proton gradient. This is NAD(P)H-quinone oxidoreductase subunit 2 B, chloroplastic from Helianthus annuus (Common sunflower).